A 404-amino-acid polypeptide reads, in one-letter code: Exodeoxyribonuclease 7 large subunit (404 aa).

This sequence belongs to the XseA family. Heterooligomer composed of large and small subunits.

The protein resides in the cytoplasm. It carries out the reaction Exonucleolytic cleavage in either 5'- to 3'- or 3'- to 5'-direction to yield nucleoside 5'-phosphates.. In terms of biological role, bidirectionally degrades single-stranded DNA into large acid-insoluble oligonucleotides, which are then degraded further into small acid-soluble oligonucleotides. This chain is Exodeoxyribonuclease 7 large subunit, found in Tropheryma whipplei (strain TW08/27) (Whipple's bacillus).